The following is a 437-amino-acid chain: Glutamate-1-semialdehyde 2,1-aminomutase (437 aa).

The residue at position 272 (lysine 272) is an N6-(pyridoxal phosphate)lysine.

The protein belongs to the class-III pyridoxal-phosphate-dependent aminotransferase family. HemL subfamily. Homodimer. It depends on pyridoxal 5'-phosphate as a cofactor.

It is found in the cytoplasm. The catalysed reaction is (S)-4-amino-5-oxopentanoate = 5-aminolevulinate. The protein operates within porphyrin-containing compound metabolism; protoporphyrin-IX biosynthesis; 5-aminolevulinate from L-glutamyl-tRNA(Glu): step 2/2. This is Glutamate-1-semialdehyde 2,1-aminomutase from Moorella thermoacetica (strain ATCC 39073 / JCM 9320).